Reading from the N-terminus, the 406-residue chain is ATP-dependent RNA helicase eIF4A (406 aa).

The Q motif motif lies at 25-53 (DSFDAMDLKPELLRGVYAYGFERPSAIQQ). Residues 56-226 (ILPIIKGNDV…TKFMRDPVRI (171 aa)) enclose the Helicase ATP-binding domain. ATP is bound at residue 69–76 (AQSGTGKT). The DEAD box motif lies at 174–177 (DEAD). In terms of domain architecture, Helicase C-terminal spans 237–398 (GIKQFYIAVE…EMPMNVAGKF (162 aa)).

This sequence belongs to the DEAD box helicase family. eIF4A subfamily. As to quaternary structure, component of the eIF4F complex, which composition varies with external and internal environmental conditions. It is composed of at least eIF4A, eIF4E and eIF4G.

It is found in the cytoplasm. The enzyme catalyses ATP + H2O = ADP + phosphate + H(+). In terms of biological role, ATP-dependent RNA helicase which is a subunit of the eIF4F complex involved in cap recognition and is required for mRNA binding to ribosome. In the current model of translation initiation, eIF4A unwinds RNA secondary structures in the 5'-UTR of mRNAs which is necessary to allow efficient binding of the small ribosomal subunit, and subsequent scanning for the initiator codon. This Aspergillus fumigatus (strain ATCC MYA-4609 / CBS 101355 / FGSC A1100 / Af293) (Neosartorya fumigata) protein is ATP-dependent RNA helicase eIF4A (tif1).